A 219-amino-acid chain; its full sequence is GTP-binding protein Rit1 (219 aa).

GTP-binding positions include 28-35, 75-79, and 134-137; these read GAGGVGKS, DTAGQ, and NKSD.

It belongs to the small GTPase superfamily. Ras family. In terms of assembly, interacts with AFDN, the C-terminal domain of RALGDS and RLF, but not with RIN1 and PIK3CA. RLF binds exclusively to the active GTP-bound form. Strongly interacts with BRAF, but only weakly with RAF1. BARF and RAF1 association is dependent upon the GTP-bound state. Interacts with RGL3. In terms of tissue distribution, expressed in many tissues.

It localises to the cell membrane. The catalysed reaction is GTP + H2O = GDP + phosphate + H(+). Its activity is regulated as follows. Alternates between an inactive form bound to GDP and an active form bound to GTP. Functionally, plays a crucial role in coupling NGF stimulation to the activation of both EPHB2 and MAPK14 signaling pathways and in NGF-dependent neuronal differentiation. Involved in ELK1 transactivation through the Ras-MAPK signaling cascade that mediates a wide variety of cellular functions, including cell proliferation, survival, and differentiation. In Mus musculus (Mouse), this protein is GTP-binding protein Rit1 (Rit1).